We begin with the raw amino-acid sequence, 80 residues long: MQKKEKIIENLEKAGNTFHLIIKCNTIARILKNLSTYAILLNSNILEEHVDLLLIYLSTQRMWKLNNLKKTLQYKGSKKK.

This is an uncharacterized protein from Schizosaccharomyces pombe (strain 972 / ATCC 24843) (Fission yeast).